The following is a 467-amino-acid chain: Argininosuccinate lyase (467 aa).

Belongs to the lyase 1 family. Argininosuccinate lyase subfamily.

It localises to the cytoplasm. It catalyses the reaction 2-(N(omega)-L-arginino)succinate = fumarate + L-arginine. The protein operates within amino-acid biosynthesis; L-arginine biosynthesis; L-arginine from L-ornithine and carbamoyl phosphate: step 3/3. The chain is Argininosuccinate lyase from Thioalkalivibrio sulfidiphilus (strain HL-EbGR7).